We begin with the raw amino-acid sequence, 961 residues long: Replication protein 1a (961 aa).

The segment at 48-380 (VRNKLSIEEA…VIINGQAIMA (333 aa)) is methyltransferase. Residues 71–260 (NLTQQYHAPH…HGWQDLGSFF (190 aa)) enclose the Alphavirus-like MT domain. The interval 392–409 (VAFALTLNLYQKYEKLTA) is membrane association. Residues 503-512 (KTKRSKKKAK) are compositionally biased toward basic residues. Positions 503–541 (KTKRSKKKAKVPPAAEIPQEEFHDAPESSSPESVSDDVK) are disordered. The 156-residue stretch at 655-810 (DKTCACSNLR…NLQYDRRDVV (156 aa)) folds into the (+)RNA virus helicase ATP-binding domain. The segment at 682–946 (MVDGVAGCGK…TRHKKSFEYC (265 aa)) is ATP-dependent helicase. 685-692 (GVAGCGKT) provides a ligand contact to ATP. Residues 811-961 (HKTYRCPQDV…AGDLIFNCVK (151 aa)) enclose the (+)RNA virus helicase C-terminal domain.

The protein belongs to the bromoviridae replication protein 1a family. In terms of assembly, interacts with RNA-directed RNA polymerase 2a.

The protein resides in the host endoplasmic reticulum membrane. Its function is as follows. Involved in the virus replication. Contains a helicase domain and a methyltransferase domain. The methyltransferase domain is probably involved in viral RNA capping. Involved in the formation of ER membrane spherular invaginations in which RNA replication complexes form. This Bromus inermis (Smooth brome grass) protein is Replication protein 1a.